The sequence spans 373 residues: GDP-mannose 4,6-dehydratase (373 aa).

Residues 10 to 15, 65 to 66, 87 to 91, and tyrosine 102 contribute to the NADP(+) site; these read GITGQD, DL, and LGAQS. Residue threonine 134 is part of the active site. Residues glutamate 136 and tyrosine 158 each act as nucleophile in the active site. NADP(+) is bound by residues lysine 162, histidine 188, and arginine 193.

Belongs to the NAD(P)-dependent epimerase/dehydratase family. GDP-mannose 4,6-dehydratase subfamily. NADP(+) is required as a cofactor.

It carries out the reaction GDP-alpha-D-mannose = GDP-4-dehydro-alpha-D-rhamnose + H2O. In terms of biological role, catalyzes the conversion of GDP-D-mannose to GDP-4-dehydro-6-deoxy-D-mannose. In Vibrio cholerae serotype O1 (strain ATCC 39315 / El Tor Inaba N16961), this protein is GDP-mannose 4,6-dehydratase.